The sequence spans 195 residues: Protein SYM1 (195 aa).

4 helical membrane-spanning segments follow: residues 17 to 39 (LITN…QFFF), 59 to 78 (RAII…WYKF), 99 to 121 (STLL…PLYY), and 168 to 190 (PVQF…LSYV).

It belongs to the peroxisomal membrane protein PXMP2/4 family.

It is found in the mitochondrion inner membrane. In terms of biological role, may be involved in cellular response to stress. Required to maintain mitochondrial DNA (mtDNA) integrity and stability. The chain is Protein SYM1 (SYM1) from Candida albicans (strain SC5314 / ATCC MYA-2876) (Yeast).